A 410-amino-acid chain; its full sequence is Peptidase T (410 aa).

Zn(2+) is bound at residue His77. Residue Asp79 is part of the active site. Residue Asp140 participates in Zn(2+) binding. The active-site Proton acceptor is the Glu174. Positions 175, 197, and 379 each coordinate Zn(2+).

This sequence belongs to the peptidase M20B family. Zn(2+) serves as cofactor.

The protein resides in the cytoplasm. It catalyses the reaction Release of the N-terminal residue from a tripeptide.. In terms of biological role, cleaves the N-terminal amino acid of tripeptides. This Desulfitobacterium hafniense (strain Y51) protein is Peptidase T.